Here is an 874-residue protein sequence, read N- to C-terminus: Collagen alpha-2(I) chain (874 aa).

The disordered stretch occupies residues 1 to 874 (SGGFDFSFLP…FGYEGDFYRA (874 aa)). 2 positions are modified to 4-hydroxyproline: Pro10 and Pro13. An Allysine modification is found at Lys16. Residues 27–66 (LMGPRGPPGASGAPGPQGFQGPAGEPGEPGQTGPAGARGP) show a composition bias toward low complexity. 2 positions are modified to 4-hydroxyproline: Pro34 and Pro40. Residue Lys93 is modified to 5-hydroxylysine; alternate. Lys93 carries an O-linked (Gal...) hydroxylysine; alternate glycan. 3 stretches are compositionally biased toward low complexity: residues 110 to 143 (ARGR…SAGP), 188 to 209 (PGAN…AGAP), and 218 to 236 (PGPV…AGSK). Residues 237 to 246 (GESGGKGEPG) are compositionally biased toward gly residues. The span at 247-257 (SAGPQGPPGSS) shows a compositional bias: low complexity. 4-hydroxyproline is present on residues Pro317 and Pro320. Composition is skewed to low complexity over residues 346-365 (LPGI…RGEA), 434-451 (PGES…SRGP), and 463-473 (EPGVVGAPGTA). The segment covering 474–483 (GPAGSGGLPG) has biased composition (gly residues). 2 stretches are compositionally biased toward low complexity: residues 491–538 (RGEV…PRGS) and 545–565 (VGPA…QPGA). The segment covering 566-575 (KGERGTKGPK) has biased composition (basic and acidic residues). The span at 583–593 (PTGPVGSAGPA) shows a compositional bias: low complexity. Residues 603–612 (GSRGDGGPPG) show a composition bias toward gly residues. Positions 614-623 (TGFPGAAGRT) are enriched in low complexity. Over residues 648-662 (GPVGRGETGAGGPPG) the composition is skewed to gly residues. 2 stretches are compositionally biased toward low complexity: residues 663–697 (FTGE…LGLP) and 705–724 (LPGV…AGPP). Over residues 725–744 (GARGDGNPGSDGPPGRGAAG) the composition is skewed to gly residues. Composition is skewed to low complexity over residues 745-755 (APGPHGTVGPA) and 763-778 (EPGP…ALGP).

This sequence belongs to the fibrillar collagen family. Trimers of one alpha 2(I) and two alpha 1(I) chains. Interacts (via C-terminus) with TMEM131 (via PapD-L domain); the interaction is direct and is involved in assembly and TRAPPIII ER-to-Golgi transport complex-dependent secretion of collagen. Post-translationally, prolines at the third position of the tripeptide repeating unit (G-X-Y) are hydroxylated in some or all of the chains. Expressed in bones.

It is found in the secreted. Its subcellular location is the extracellular space. The protein resides in the extracellular matrix. Its function is as follows. Type I collagen is a member of group I collagen (fibrillar forming collagen). This chain is Collagen alpha-2(I) chain, found in Megalonyx jeffersonii (Jefferson's ground sloth).